Reading from the N-terminus, the 390-residue chain is Ureide permease 1 (390 aa).

Residues 1 to 9 (MYMIESKGG) are Extracellular-facing. A helical membrane pass occupies residues 10–30 (AIACMLLALLFLGTWPAIMTL). Over 31 to 44 (TERRGRLPQHTYLD) the chain is Cytoplasmic. Residues 45-65 (YTLTNLLAAVIIALTLGEIGP) form a helical membrane-spanning segment. Topologically, residues 66–78 (SRPNFFTQLSQDN) are extracellular. The helical transmembrane segment at 79–99 (WQSVMFAMAGGIVLSLGNLAT) threads the bilayer. Topologically, residues 100-101 (QY) are cytoplasmic. Residues 102-122 (AWAYVGLSVTEVITASITVVI) form a helical membrane-spanning segment. At 123-136 (GTTLNYFLDDRINR) the chain is on the extracellular side. Residues 137-157 (AEVLFPGVACFLIAVCFGSAV) form a helical membrane-spanning segment. Over 158-221 (HKSNAADNKT…RAIKVFGKST (64 aa)) the chain is Cytoplasmic. 213-220 (AIKVFGKS) lines the ATP pocket. Residues 222-242 (IIGLVITFFAGICFSLFSPAF) form a helical membrane-spanning segment. The Extracellular portion of the chain corresponds to 243-261 (NLATNDQWHTLKHGVPKLN). The helical transmembrane segment at 262 to 282 (VYTAFFYFSISAFVVALILNI) threads the bilayer. The Cytoplasmic segment spans residues 283 to 307 (RFLYWPILGLPRSSFKAYLNDWNGR). Residues 308–328 (GWSFLAGFLCGFGNGLQFMGG) traverse the membrane as a helical segment. Over 329–333 (QAAGY) the chain is Extracellular. The helical transmembrane segment at 334–354 (AAADAVQALPLVSTFWGILLF) threads the bilayer. The Cytoplasmic portion of the chain corresponds to 355-363 (GEYRRSSRK). Residues 364-384 (TYTLLISMLLMFIVAVAVLMA) traverse the membrane as a helical segment. The Extracellular portion of the chain corresponds to 385 to 390 (SSGHRK).

Belongs to the plant ureide permease (TC 2.A.7.19) family. As to expression, expressed in leaves, flowers, roots and stems.

The protein localises to the membrane. Proton-coupled transporter that transports a wide spectrum of oxo derivatives of heterocyclic nitrogen compounds, including allantoin, uric acid and xanthine, but not adenine. Mediates high affinity transport of uracil and 5-fluorouracil (a toxic uracil analog). Mediates transport of free pyrimidines and may function during early seedling development in salvage pathways, by the utilization of pyrimidines from seed storage tissue. This is Ureide permease 1 from Arabidopsis thaliana (Mouse-ear cress).